The sequence spans 125 residues: Small ribosomal subunit protein uS13 (125 aa).

Belongs to the universal ribosomal protein uS13 family. In terms of assembly, part of the 30S ribosomal subunit. Forms a loose heterodimer with protein S19. Forms two bridges to the 50S subunit in the 70S ribosome.

Functionally, located at the top of the head of the 30S subunit, it contacts several helices of the 16S rRNA. In the 70S ribosome it contacts the 23S rRNA (bridge B1a) and protein L5 of the 50S subunit (bridge B1b), connecting the 2 subunits; these bridges are implicated in subunit movement. Contacts the tRNAs in the A and P-sites. The polypeptide is Small ribosomal subunit protein uS13 (Orientia tsutsugamushi (strain Ikeda) (Rickettsia tsutsugamushi)).